The chain runs to 312 residues: Porphobilinogen deaminase (312 aa).

The residue at position 241 (C241) is an S-(dipyrrolylmethanemethyl)cysteine.

It belongs to the HMBS family. As to quaternary structure, monomer. The cofactor is dipyrromethane.

The enzyme catalyses 4 porphobilinogen + H2O = hydroxymethylbilane + 4 NH4(+). It functions in the pathway porphyrin-containing compound metabolism; protoporphyrin-IX biosynthesis; coproporphyrinogen-III from 5-aminolevulinate: step 2/4. In terms of biological role, tetrapolymerization of the monopyrrole PBG into the hydroxymethylbilane pre-uroporphyrinogen in several discrete steps. This is Porphobilinogen deaminase from Trichlorobacter lovleyi (strain ATCC BAA-1151 / DSM 17278 / SZ) (Geobacter lovleyi).